The primary structure comprises 480 residues: Aromatic-L-amino-acid decarboxylase (480 aa).

N6-(pyridoxal phosphate)lysine is present on Lys292.

It belongs to the group II decarboxylase family. It depends on pyridoxal 5'-phosphate as a cofactor.

It carries out the reaction L-tryptophan + H(+) = tryptamine + CO2. The enzyme catalyses L-phenylalanine + H(+) = 2-phenylethylamine + CO2. The catalysed reaction is 5-hydroxy-L-tryptophan + H(+) = serotonin + CO2. It catalyses the reaction L-dopa + H(+) = dopamine + CO2. In terms of biological role, involved in bacillamide C biosynthesis. Catalyzes the decarboxylation of L-tryptophan to tryptamine. The tryptamine obtained is then probably incorporated into the bacillamide C peptide, which is derived from the amino acids alanine, cysteine and tryptophan through nonribosomal peptide synthetase (NRPS) biosynthesis strategy. L-tryptophan is the best substrate, but the enzyme displays broad substrate specificity for various aromatic amino acids in vitro and it can also catalyze the decarboxylation of L-phenylalanine, 5-hydroxy-L-tryptophan (L-HTP) and L-DOPA, with lower efficiency. Exhibits weak activity with L-tyrosine. The protein is Aromatic-L-amino-acid decarboxylase of Bacillus atrophaeus.